Reading from the N-terminus, the 444-residue chain is Trigger factor (444 aa).

Positions 161 to 246 (GDRVVIDFKG…VQKVEGQKLP (86 aa)) constitute a PPIase FKBP-type domain.

This sequence belongs to the FKBP-type PPIase family. Tig subfamily.

It localises to the cytoplasm. It carries out the reaction [protein]-peptidylproline (omega=180) = [protein]-peptidylproline (omega=0). Functionally, involved in protein export. Acts as a chaperone by maintaining the newly synthesized protein in an open conformation. Functions as a peptidyl-prolyl cis-trans isomerase. This chain is Trigger factor, found in Saccharophagus degradans (strain 2-40 / ATCC 43961 / DSM 17024).